Consider the following 284-residue polypeptide: CBY1-interacting BAR domain-containing protein 1-A (284 aa).

The N-terminal 48 residues, 1–48, are a transit peptide targeting the mitochondrion; that stretch reads MSQTPEARARDNQTRQIQESVNNVEKHFGELCQIFAGYVRKTARLRDK. Residues 11-221 form a BAR-like region; it reads DNQTRQIQES…DIDEEEDLEV (211 aa). 2 coiled-coil regions span residues 142-184 and 260-284; these read RQII…IKKL and NRQK…EDEN. Over residues 242 to 261 the composition is skewed to polar residues; that stretch reads SRTGSTSRGPSVISQPPGNR. The disordered stretch occupies residues 242-284; the sequence is SRTGSTSRGPSVISQPPGNRQKNRIEDEDEEEEDDENSTEDEN. Acidic residues predominate over residues 267–284; it reads EDEDEEEEDDENSTEDEN.

The protein belongs to the CIBAR family.

The protein resides in the cytoplasm. It is found in the cytoskeleton. The protein localises to the microtubule organizing center. Its subcellular location is the centrosome. It localises to the centriole. The protein resides in the nucleus. It is found in the mitochondrion inner membrane. The protein localises to the cell projection. Its subcellular location is the cilium. It localises to the flagellum. In terms of biological role, plays a critical role in regulating mitochondrial ultrastructure and function by maintaining the integrity of mitochondrial morphology, particularly the organization of cristae. Plays a crucial role in ciliogenesis. Plays a key role in the correct positioning of the annulus, a septin-based ring structure in the sperm flagellum, serving both as a physical barrier and a membrane diffusion barrier that separates the midpiece (MP) from the principal piece (PP). The sequence is that of CBY1-interacting BAR domain-containing protein 1-A from Xenopus laevis (African clawed frog).